A 208-amino-acid chain; its full sequence is Probable nicotinate-nucleotide adenylyltransferase (208 aa).

Belongs to the NadD family.

The catalysed reaction is nicotinate beta-D-ribonucleotide + ATP + H(+) = deamido-NAD(+) + diphosphate. The protein operates within cofactor biosynthesis; NAD(+) biosynthesis; deamido-NAD(+) from nicotinate D-ribonucleotide: step 1/1. Functionally, catalyzes the reversible adenylation of nicotinate mononucleotide (NaMN) to nicotinic acid adenine dinucleotide (NaAD). This Trichormus variabilis (strain ATCC 29413 / PCC 7937) (Anabaena variabilis) protein is Probable nicotinate-nucleotide adenylyltransferase.